Consider the following 680-residue polypeptide: UvrABC system protein B (680 aa).

Residues 27–422 (AGALGGVTFQ…GRMAGEHVAE (396 aa)) form the Helicase ATP-binding domain. ATP is bound at residue 40–47 (GATGTGKT). Residues 93-116 (YYDYYQPEAYIPQTDTYIEKSASI) carry the Beta-hairpin motif. The Helicase C-terminal domain occupies 443–609 (QVDDLLHEIH…PIVKRLDANS (167 aa)). The 36-residue stretch at 641–676 (PELVSQLEIQMRDAAKKLEFEKAAEYRDKIHKLRER) folds into the UVR domain.

It belongs to the UvrB family. In terms of assembly, forms a heterotetramer with UvrA during the search for lesions. Interacts with UvrC in an incision complex.

It is found in the cytoplasm. The UvrABC repair system catalyzes the recognition and processing of DNA lesions. A damage recognition complex composed of 2 UvrA and 2 UvrB subunits scans DNA for abnormalities. Upon binding of the UvrA(2)B(2) complex to a putative damaged site, the DNA wraps around one UvrB monomer. DNA wrap is dependent on ATP binding by UvrB and probably causes local melting of the DNA helix, facilitating insertion of UvrB beta-hairpin between the DNA strands. Then UvrB probes one DNA strand for the presence of a lesion. If a lesion is found the UvrA subunits dissociate and the UvrB-DNA preincision complex is formed. This complex is subsequently bound by UvrC and the second UvrB is released. If no lesion is found, the DNA wraps around the other UvrB subunit that will check the other stand for damage. This chain is UvrABC system protein B, found in Gloeobacter violaceus (strain ATCC 29082 / PCC 7421).